The primary structure comprises 449 residues: Tubulin alpha-1C chain (449 aa).

The MREC motif motif lies at 1-4; it reads MREC. Gln-11 provides a ligand contact to GTP. Position 40 is an N6-acetyllysine (Lys-40). Glu-71, Ser-140, Gly-144, Thr-145, Thr-179, Asn-206, and Asn-228 together coordinate GTP. Glu-71 contributes to the Mg(2+) binding site. Glu-254 is an active-site residue. A 3'-nitrotyrosine modification is found at Tyr-282. The segment at 429–449 is disordered; the sequence is EKDYEEVGADSADGEDEGEEY. A compositionally biased stretch (acidic residues) spans 431-449; it reads DYEEVGADSADGEDEGEEY. Tyr-432 is modified (phosphotyrosine). Ser-439 bears the Phosphoserine mark. Tyr-449 carries the post-translational modification 3'-nitrotyrosine.

Belongs to the tubulin family. In terms of assembly, dimer of alpha and beta chains. A typical microtubule is a hollow water-filled tube with an outer diameter of 25 nm and an inner diameter of 15 nM. Alpha-beta heterodimers associate head-to-tail to form protofilaments running lengthwise along the microtubule wall with the beta-tubulin subunit facing the microtubule plus end conferring a structural polarity. Microtubules usually have 13 protofilaments but different protofilament numbers can be found in some organisms and specialized cells. It depends on Mg(2+) as a cofactor. Some glutamate residues at the C-terminus are polyglutamylated, resulting in polyglutamate chains on the gamma-carboxyl group. Polyglutamylation plays a key role in microtubule severing by spastin (SPAST). SPAST preferentially recognizes and acts on microtubules decorated with short polyglutamate tails: severing activity by SPAST increases as the number of glutamates per tubulin rises from one to eight, but decreases beyond this glutamylation threshold. Glutamylation is also involved in cilia motility. Post-translationally, some glutamate residues at the C-terminus are monoglycylated but not polyglycylated due to the absence of functional TTLL10 in human. Monoglycylation is mainly limited to tubulin incorporated into cilia and flagella axonemes, which is required for their stability and maintenance. Flagella glycylation controls sperm motility. Both polyglutamylation and monoglycylation can coexist on the same protein on adjacent residues, and lowering glycylation levels increases polyglutamylation, and reciprocally. In terms of processing, acetylation of alpha chains at Lys-40 is located inside the microtubule lumen. This modification has been correlated with increased microtubule stability, intracellular transport and ciliary assembly. Methylation of alpha chains at Lys-40 is found in mitotic microtubules and is required for normal mitosis and cytokinesis contributing to genomic stability. Post-translationally, nitration of Tyr-449 is irreversible and interferes with normal dynein intracellular distribution. In terms of processing, undergoes a tyrosination/detyrosination cycle, the cyclic removal and re-addition of a C-terminal tyrosine residue by the enzymes tubulin tyrosine carboxypeptidase (MATCAP1/KIAA0895L, VASH1 or VASH2) and tubulin tyrosine ligase (TTL), respectively. Tyrosination promotes microtubule interaction with CAP-Gly domain-containing proteins such as CLIP1, CLIP2 and DCTN1. Tyrosination regulates the initiation of dynein-dynactin motility via interaction with DCTN1, which brings the dynein-dynactin complex into contact with microtubules. In neurons, tyrosinated tubulins mediate the initiation of retrograde vesicle transport. Post-translationally, detyrosination is involved in metaphase plate congression by guiding chromosomes during mitosis: detyrosination promotes interaction with CENPE, promoting pole-proximal transport of chromosomes toward the equator. Detyrosination increases microtubules-dependent mechanotransduction in dystrophic cardiac and skeletal muscle. In cardiomyocytes, detyrosinated microtubules are required to resist to contractile compression during contraction: detyrosination promotes association with desmin (DES) at force-generating sarcomeres, leading to buckled microtubules and mechanical resistance to contraction.

The protein resides in the cytoplasm. It localises to the cytoskeleton. The enzyme catalyses GTP + H2O = GDP + phosphate + H(+). Tubulin is the major constituent of microtubules, a cylinder consisting of laterally associated linear protofilaments composed of alpha- and beta-tubulin heterodimers. Microtubules grow by the addition of GTP-tubulin dimers to the microtubule end, where a stabilizing cap forms. Below the cap, tubulin dimers are in GDP-bound state, owing to GTPase activity of alpha-tubulin. This chain is Tubulin alpha-1C chain (TUBA1C), found in Homo sapiens (Human).